The chain runs to 131 residues: Phosphoribosyl-AMP cyclohydrolase (131 aa).

Aspartate 78 is a Mg(2+) binding site. Cysteine 79 is a Zn(2+) binding site. Positions 80 and 82 each coordinate Mg(2+). Zn(2+) contacts are provided by cysteine 96 and cysteine 103.

It belongs to the PRA-CH family. Homodimer. Requires Mg(2+) as cofactor. Zn(2+) serves as cofactor.

Its subcellular location is the cytoplasm. It carries out the reaction 1-(5-phospho-beta-D-ribosyl)-5'-AMP + H2O = 1-(5-phospho-beta-D-ribosyl)-5-[(5-phospho-beta-D-ribosylamino)methylideneamino]imidazole-4-carboxamide. Its pathway is amino-acid biosynthesis; L-histidine biosynthesis; L-histidine from 5-phospho-alpha-D-ribose 1-diphosphate: step 3/9. Catalyzes the hydrolysis of the adenine ring of phosphoribosyl-AMP. This is Phosphoribosyl-AMP cyclohydrolase from Neisseria meningitidis serogroup C / serotype 2a (strain ATCC 700532 / DSM 15464 / FAM18).